The primary structure comprises 346 residues: 4-hydroxy-2-oxovalerate aldolase (346 aa).

The region spanning 8–260 is the Pyruvate carboxyltransferase domain; the sequence is VTLHDMSLRD…ETGIDLYKIM (253 aa). Residue 16–17 participates in substrate binding; sequence RD. Residue D17 participates in Mn(2+) binding. The active-site Proton acceptor is the H20. Residues S170 and H199 each contribute to the substrate site. Mn(2+)-binding residues include H199 and H201. Substrate is bound at residue Y290.

The protein belongs to the 4-hydroxy-2-oxovalerate aldolase family.

The enzyme catalyses (S)-4-hydroxy-2-oxopentanoate = acetaldehyde + pyruvate. The chain is 4-hydroxy-2-oxovalerate aldolase (nahM) from Stutzerimonas stutzeri (Pseudomonas stutzeri).